The following is an 855-amino-acid chain: DNA mismatch repair protein MutS (855 aa).

613-620 (GPNMGGKS) lines the ATP pocket. The disordered stretch occupies residues 796–817 (TTSLPHEQPRAKPGKPAIPQQS).

This sequence belongs to the DNA mismatch repair MutS family.

This protein is involved in the repair of mismatches in DNA. It is possible that it carries out the mismatch recognition step. This protein has a weak ATPase activity. The sequence is that of DNA mismatch repair protein MutS from Pseudomonas syringae pv. tomato (strain ATCC BAA-871 / DC3000).